A 96-amino-acid chain; its full sequence is Co-chaperonin GroES (96 aa).

Belongs to the GroES chaperonin family. As to quaternary structure, heptamer of 7 subunits arranged in a ring. Interacts with the chaperonin GroEL.

It localises to the cytoplasm. Together with the chaperonin GroEL, plays an essential role in assisting protein folding. The GroEL-GroES system forms a nano-cage that allows encapsulation of the non-native substrate proteins and provides a physical environment optimized to promote and accelerate protein folding. GroES binds to the apical surface of the GroEL ring, thereby capping the opening of the GroEL channel. This is Co-chaperonin GroES from Thiobacillus denitrificans (strain ATCC 25259 / T1).